The chain runs to 136 residues: ATP synthase epsilon chain (136 aa).

Belongs to the ATPase epsilon chain family. In terms of assembly, F-type ATPases have 2 components, CF(1) - the catalytic core - and CF(0) - the membrane proton channel. CF(1) has five subunits: alpha(3), beta(3), gamma(1), delta(1), epsilon(1). CF(0) has three main subunits: a, b and c.

It is found in the cell membrane. Functionally, produces ATP from ADP in the presence of a proton gradient across the membrane. This Macrococcus caseolyticus (strain JCSC5402) (Macrococcoides caseolyticum) protein is ATP synthase epsilon chain.